A 318-amino-acid polypeptide reads, in one-letter code: GTP cyclohydrolase MptA (318 aa).

It belongs to the GTP cyclohydrolase IV family. Homodimer. The cofactor is Fe(2+).

The enzyme catalyses GTP + H2O = 7,8-dihydroneopterin 2',3'-cyclic phosphate + formate + diphosphate + H(+). Its pathway is cofactor biosynthesis; 5,6,7,8-tetrahydromethanopterin biosynthesis. Converts GTP to 7,8-dihydro-D-neopterin 2',3'-cyclic phosphate, the first intermediate in the biosynthesis of coenzyme methanopterin. The polypeptide is GTP cyclohydrolase MptA (Methanosarcina acetivorans (strain ATCC 35395 / DSM 2834 / JCM 12185 / C2A)).